Here is a 367-residue protein sequence, read N- to C-terminus: MAGNSIGQLFTVTTCGESHGAGLMAIVDGVPPGLALSEADLQIDLDRRKPGTSKYSTQRRESDEVEIISGVFEGKTTGTSIGLLIRNTNQKSKDYSEIKDTFRPGHADYTYSMKYGFRDYRGGGRSSARETAMRVAAGAIAKKYLQDRLGVQIRGHVTQIGNEYSNVAEPSKIDWDFVNSNPFFCADKEAVSRFESLIDNLRREGTSCGARLEVIASGVPVGLGEPVFDRLDADIAHAMMSINAVKGVEIGDGMAVAGQFGHSSRDEMTPDGFTANHAGGILGGISSGQDIRVSIALKPTSSITTAGKSINTQGESVDMLTKGRHDPCVGVRATPIAEAMLAIVLLDHYLRHRGQNADVEQPLASIT.

Arg48 provides a ligand contact to NADP(+). Residues 125 to 127 (RSS), 243 to 244 (NA), Gly283, 298 to 302 (KPTSS), and Arg324 contribute to the FMN site.

This sequence belongs to the chorismate synthase family. In terms of assembly, homotetramer. FMNH2 serves as cofactor.

It carries out the reaction 5-O-(1-carboxyvinyl)-3-phosphoshikimate = chorismate + phosphate. It participates in metabolic intermediate biosynthesis; chorismate biosynthesis; chorismate from D-erythrose 4-phosphate and phosphoenolpyruvate: step 7/7. Catalyzes the anti-1,4-elimination of the C-3 phosphate and the C-6 proR hydrogen from 5-enolpyruvylshikimate-3-phosphate (EPSP) to yield chorismate, which is the branch point compound that serves as the starting substrate for the three terminal pathways of aromatic amino acid biosynthesis. This reaction introduces a second double bond into the aromatic ring system. This chain is Chorismate synthase, found in Psychrobacter arcticus (strain DSM 17307 / VKM B-2377 / 273-4).